The sequence spans 518 residues: Retinal dehydrogenase 2 (518 aa).

NAD(+)-binding positions include 184–186, 210–213, and 264–266; these read IPW, KPAE, and STE. Glu-286 functions as the Proton acceptor in the catalytic mechanism. The active-site Nucleophile is Cys-320. Residues 366 to 370 and Glu-417 contribute to the NAD(+) site; that span reads KQYNK.

This sequence belongs to the aldehyde dehydrogenase family. Homotetramer.

It is found in the cytoplasm. It carries out the reaction retinal + NAD(+) + H2O = retinoate + NADH + 2 H(+). The enzyme catalyses all-trans-retinal + NAD(+) + H2O = all-trans-retinoate + NADH + 2 H(+). The catalysed reaction is all-trans-13,14-dihydroretinal + NAD(+) + H2O = all-trans-13,14-dihydroretinoate + NADH + 2 H(+). It functions in the pathway cofactor metabolism; retinol metabolism. Catalyzes the NAD-dependent oxidation of aldehyde substrates, such as all-trans-retinal and all-trans-13,14-dihydroretinal, to their corresponding carboxylic acids, all-trans-retinoate and all-trans-13,14-dihydroretinoate, respectively. Retinoate signaling is critical for the transcriptional control of many genes, for instance it is crucial for initiation of meiosis in both male and female. Recognizes retinal as substrate, both in its free form and when bound to cellular retinol-binding protein. Lacks activity with benzaldehyde, acetaldehyde and octanal. Displays complete lack of activity with citral. The polypeptide is Retinal dehydrogenase 2 (ALDH1A2) (Gallus gallus (Chicken)).